The following is a 134-amino-acid chain: S-protein homolog 18 (134 aa).

The N-terminal stretch at 1 to 25 (MCPSSFRLILSVILIAFLFVGLCEA) is a signal peptide. The N-linked (GlcNAc...) asparagine glycan is linked to Asn87.

This sequence belongs to the plant self-incompatibility (S1) protein family.

It is found in the secreted. This is S-protein homolog 18 from Arabidopsis thaliana (Mouse-ear cress).